Reading from the N-terminus, the 186-residue chain is Dynactin subunit 3 (186 aa).

An N-acetylalanine modification is found at Ala-2. Residues 135–157 are a coiled coil; that stretch reads QQQDQCVEITEESKALLEEYNKT.

This sequence belongs to the dynactin subunit 3 family. Subunit of dynactin, a multiprotein complex part of a tripartite complex with dynein and a adapter, such as BICDL1, BICD2 or HOOK3. The dynactin complex is built around ACTR1A/ACTB filament and consists of an actin-related filament composed of a shoulder domain, a pointed end and a barbed end. Its length is defined by its flexible shoulder domain. The soulder is composed of 2 DCTN1 subunits, 4 DCTN2 and 2 DCTN3. The 4 DCNT2 (via N-terminus) bind the ACTR1A filament and act as molecular rulers to determine the length. The pointed end is important for binding dynein-dynactin cargo adapters. Consists of 4 subunits: ACTR10, DCNT4, DCTN5 and DCTN6. The barbed end is composed of a CAPZA1:CAPZB heterodimers, which binds ACTR1A/ACTB filament and dynactin and stabilizes dynactin. As to expression, ubiquitously expressed. Highly expressed in muscle and pancreas and detected at lower levels in brain.

It is found in the cytoplasm. The protein localises to the cytoskeleton. The protein resides in the microtubule organizing center. It localises to the centrosome. Its subcellular location is the chromosome. It is found in the centromere. The protein localises to the kinetochore. The protein resides in the spindle. It localises to the cleavage furrow. Its subcellular location is the midbody. In terms of biological role, part of the dynactin complex that activates the molecular motor dynein for ultra-processive transport along microtubules. Together with dynein may be involved in spindle assembly and cytokinesis. The polypeptide is Dynactin subunit 3 (Homo sapiens (Human)).